The primary structure comprises 420 residues: Shaggy-related protein kinase delta (420 aa).

Positions 1–61 are disordered; sequence MESHLGNGVG…DIIDGVGAEP (61 aa). The segment covering 10 to 26 has biased composition (polar residues); that stretch reads GSSRSAKNTKNTSSSVD. Positions 28-41 are enriched in basic and acidic residues; the sequence is LSRDMLEMKIRDKT. A compositionally biased stretch (acidic residues) spans 42–53; sequence EADEERDSEPDI. Positions 82-366 constitute a Protein kinase domain; sequence YIAEHVVGTG…AVEACIHPFF (285 aa). ATP contacts are provided by residues 88–96 and Lys-111; that span reads VGTGSFGMV. The active-site Proton acceptor is Asp-207. Residue Tyr-242 is modified to Phosphotyrosine.

The protein belongs to the protein kinase superfamily. CMGC Ser/Thr protein kinase family. GSK-3 subfamily. Autophosphorylated mainly on threonine and serine residues.

It carries out the reaction L-seryl-[protein] + ATP = O-phospho-L-seryl-[protein] + ADP + H(+). It catalyses the reaction L-threonyl-[protein] + ATP = O-phospho-L-threonyl-[protein] + ADP + H(+). Its function is as follows. May mediate extracellular signals to regulate transcription in differentiating cells. The chain is Shaggy-related protein kinase delta (ASK4) from Arabidopsis thaliana (Mouse-ear cress).